Consider the following 104-residue polypeptide: Large ribosomal subunit protein bL21 (104 aa).

This sequence belongs to the bacterial ribosomal protein bL21 family. As to quaternary structure, part of the 50S ribosomal subunit. Contacts protein L20.

Its function is as follows. This protein binds to 23S rRNA in the presence of protein L20. The protein is Large ribosomal subunit protein bL21 of Salinispora tropica (strain ATCC BAA-916 / DSM 44818 / JCM 13857 / NBRC 105044 / CNB-440).